Reading from the N-terminus, the 859-residue chain is Leucine--tRNA ligase (859 aa).

The short motif at 42 to 52 (PYPSGRLHMGH) is the 'HIGH' region element. The 'KMSKS' region motif lies at 618 to 622 (KMSKS). Lys-621 contacts ATP.

This sequence belongs to the class-I aminoacyl-tRNA synthetase family.

It is found in the cytoplasm. The enzyme catalyses tRNA(Leu) + L-leucine + ATP = L-leucyl-tRNA(Leu) + AMP + diphosphate. This is Leucine--tRNA ligase from Shewanella baltica (strain OS155 / ATCC BAA-1091).